A 398-amino-acid chain; its full sequence is 8-amino-7-oxononanoate synthase (398 aa).

Positions 22 and 29 each coordinate substrate. 109–110 serves as a coordination point for pyridoxal 5'-phosphate; the sequence is GW. H141 lines the substrate pocket. Pyridoxal 5'-phosphate contacts are provided by residues S189, 214–217, and 242–245; these read DEAH and TFSK. K245 carries the post-translational modification N6-(pyridoxal phosphate)lysine. T359 provides a ligand contact to substrate.

This sequence belongs to the class-II pyridoxal-phosphate-dependent aminotransferase family. BioF subfamily. As to quaternary structure, homodimer. Requires pyridoxal 5'-phosphate as cofactor.

The enzyme catalyses 6-carboxyhexanoyl-[ACP] + L-alanine + H(+) = (8S)-8-amino-7-oxononanoate + holo-[ACP] + CO2. It functions in the pathway cofactor biosynthesis; biotin biosynthesis. Its function is as follows. Catalyzes the decarboxylative condensation of pimeloyl-[acyl-carrier protein] and L-alanine to produce 8-amino-7-oxononanoate (AON), [acyl-carrier protein], and carbon dioxide. This is 8-amino-7-oxononanoate synthase from Gluconacetobacter diazotrophicus (strain ATCC 49037 / DSM 5601 / CCUG 37298 / CIP 103539 / LMG 7603 / PAl5).